The primary structure comprises 215 residues: Adenylate kinase (215 aa).

An ATP-binding site is contributed by 10–15; that stretch reads GAGKGT. The NMP stretch occupies residues 30–59; the sequence is STGDMLRAAVKAGSPLGQQVKGVMDSGGLV. AMP-binding positions include T31, R36, 57-59, 85-88, and Q92; these read GLV and GFPR. Positions 122–159 are LID; it reads GRRVHPASGRVYHTEHNPPKVAGKDDVTGEELIQREDD. ATP-binding positions include R123 and 132 to 133; that span reads VY. Residues R156 and R167 each coordinate AMP. G201 contributes to the ATP binding site.

It belongs to the adenylate kinase family. Monomer.

The protein localises to the cytoplasm. It carries out the reaction AMP + ATP = 2 ADP. It functions in the pathway purine metabolism; AMP biosynthesis via salvage pathway; AMP from ADP: step 1/1. Its function is as follows. Catalyzes the reversible transfer of the terminal phosphate group between ATP and AMP. Plays an important role in cellular energy homeostasis and in adenine nucleotide metabolism. This chain is Adenylate kinase, found in Pseudomonas aeruginosa (strain LESB58).